A 302-amino-acid polypeptide reads, in one-letter code: Deoxyribonuclease-1-like 1 (302 aa).

Positions 1–18 are cleaved as a signal peptide; sequence MHYPTALLFLILVNGAQA. Catalysis depends on residues Glu97 and His148. Cys187 and Cys224 are disulfide-bonded. Residue Asn261 is glycosylated (N-linked (GlcNAc...) asparagine).

The protein belongs to the DNase I family.

It localises to the endoplasmic reticulum. The chain is Deoxyribonuclease-1-like 1 (DNASE1L1) from Chlorocebus aethiops (Green monkey).